Here is a 350-residue protein sequence, read N- to C-terminus: GDSL esterase/lipase At4g10955 (350 aa).

This sequence belongs to the 'GDSL' lipolytic enzyme family.

The protein is GDSL esterase/lipase At4g10955 of Arabidopsis thaliana (Mouse-ear cress).